Consider the following 321-residue polypeptide: Tetraacyldisaccharide 4'-kinase (321 aa).

Residue 54–61 (SVGGTGKT) participates in ATP binding.

This sequence belongs to the LpxK family.

The enzyme catalyses a lipid A disaccharide + ATP = a lipid IVA + ADP + H(+). It participates in glycolipid biosynthesis; lipid IV(A) biosynthesis; lipid IV(A) from (3R)-3-hydroxytetradecanoyl-[acyl-carrier-protein] and UDP-N-acetyl-alpha-D-glucosamine: step 6/6. Its function is as follows. Transfers the gamma-phosphate of ATP to the 4'-position of a tetraacyldisaccharide 1-phosphate intermediate (termed DS-1-P) to form tetraacyldisaccharide 1,4'-bis-phosphate (lipid IVA). The sequence is that of Tetraacyldisaccharide 4'-kinase from Rickettsia bellii (strain OSU 85-389).